The sequence spans 457 residues: Choline kinase alpha (457 aa).

Positions 1–86 (MKTKFCTGGE…PPADEQPEPR (86 aa)) are disordered. Low complexity predominate over residues 13-32 (PSPLGLLLSCGSGSAAPAPG). Positions 55 to 80 (LALPPPPPLPLPLPLPQPPPPQPPAD) are enriched in pro residues. Residues 117-123 (RGGLSNM), R146, and 207-213 (QFIPSRR) each bind ATP. 119-121 (GLS) contributes to the phosphocholine binding site. An N6-acetyllysine modification is found at K247. S279 carries the post-translational modification Phosphoserine. The ATP site is built by Q308 and D330.

This sequence belongs to the choline/ethanolamine kinase family. In terms of assembly, homodimer. Heterodimer with CHKB. Monomer; acetylation by KAT5 promotes dissociation of the homodimer and monomerization. As to quaternary structure, (Microbial infection) Interacts with PI4KA/PI4KIIIalpha; CHKA bridges PI4KA/PI4KIIIalpha and hepatitis C virus (HCV) non-structural protein 5A (NS5A) and potentiates NS5A-stimulated PI4KA activity, which then facilitates the targeting of the ternary complex to the ER for viral replication. In terms of processing, phosphorylated at Ser-279 by AMPK in response to glucose deprivation, leading to localization to lipid droplets. Acetylated by KAT5 at Lys-247 following phosphorylation by AMPK, leading to monomerization and conversion into a tyrosine-protein kinase.

The protein localises to the cytoplasm. Its subcellular location is the cytosol. It localises to the lipid droplet. The catalysed reaction is choline + ATP = phosphocholine + ADP + H(+). It carries out the reaction ethanolamine + ATP = phosphoethanolamine + ADP + H(+). It catalyses the reaction L-tyrosyl-[protein] + ATP = O-phospho-L-tyrosyl-[protein] + ADP + H(+). The protein operates within phospholipid metabolism; phosphatidylcholine biosynthesis; phosphocholine from choline: step 1/1. Its pathway is phospholipid metabolism; phosphatidylethanolamine biosynthesis; phosphatidylethanolamine from ethanolamine: step 1/3. With respect to regulation, homodimerization or heterodimerization is required for the choline and ethanolamine kinase activities. In terms of biological role, plays a key role in phospholipid biosynthesis by catalyzing the phosphorylation of free choline to phosphocholine, the first step in phosphatidylcholine biosynthesis. Also phosphorylates ethanolamine, thereby contributing to phosphatidylethanolamine biosynthesis. Has higher activity with choline. May contribute to tumor cell growth. This isoform plays a key role in lipolysis of lipid droplets following glucose deprivation. In response to glucose deprivation, phosphorylated by AMPK, promoting localization to lipid droplets. Phosphorylation is followed by acetylation by KAT5, leading to dissociation of the homodimer into a monomer. Monomeric CHKA isoform 1 is converted into a tyrosine-protein kinase, which phosphorylates lipid droplet structural proteins PLIN2 and PLIN3, leading to lipolysis of lipid droplets. In Homo sapiens (Human), this protein is Choline kinase alpha (CHKA).